The primary structure comprises 313 residues: DDRGK domain-containing protein 1 (313 aa).

A helical transmembrane segment spans residues M1–A28. Residues M1–S113 form a mediates interaction with CDK5RAP3 region. Over A29 to A313 the chain is Cytoplasmic. The tract at residues E40–D88 is disordered. S73 and S113 each carry phosphoserine. Residues S73–A87 show a composition bias toward low complexity. Residues G117 to L215 are mediates interaction with TRIP4. Residues R130–H185 form a disordered region. The short motif at T194–E208 is the UFM1-interacting motif (UFIM) element. The interval L215–A313 is mediates interaction with UFL1. The region spanning V228–P272 is the PCI domain. Residue K266 forms a Glycyl lysine isopeptide (Lys-Gly) (interchain with G-Cter in UFM1) linkage.

It belongs to the DDRGK1 family. Component of the UFM1 ribosome E3 ligase (UREL) complex, composed of UFL1, DDRGK1 and CDK5RAP3. Interacts with (unphosphorylated) ERN1/IRE1-alpha; interaction is dependent on UFM1 and takes place in response to endoplasmic reticulum stress, regulating ERN1/IRE1-alpha stability. Interacts with NFKBIA. Interacts with SOX9. Post-translationally, ubiquitinated. Ubiquitination probably triggers proteasomal degradation and is negatively regulated by UFL1, the enzyme involved in the ufmylation of DDRGK1. In terms of processing, ufmylated; conjugated to ubiquitin-like protein UFM1, probably at Lys-266 by UFL1. The relevance of ufmylation is however unclear: as DDRGK1 acts as a substrate adapter for ufmylation, it is uncertain whether ufmylation is a collateral effect of the ufmylation process or whether it is required to regulate its activity.

The protein resides in the endoplasmic reticulum membrane. In terms of biological role, component of the UFM1 ribosome E3 ligase (UREL) complex, a multiprotein complex that catalyzes ufmylation of endoplasmic reticulum-docked proteins. The UREL complex plays a key role in ribosome recycling by mediating mono-ufmylation of the RPL26/uL24 subunit of the 60S ribosome following ribosome dissociation: ufmylation weakens the junction between post-termination 60S subunits and SEC61 translocons, promoting release and recycling of the large ribosomal subunit from the endoplasmic reticulum membrane. Ufmylation of RPL26/uL24 and subsequent 60S ribosome recycling either take place after normal termination of translation or after ribosome stalling during cotranslational translocation at the endoplasmic reticulum. Within the UREL complex, DDRGK1 tethers the complex to the endoplasmic reticulum membrane to restrict its activity to endoplasmic reticulum-docked ribosomes and acts as an ufmylation 'reader': following RPL26/uL24 ufmylation, DDRGK1 specifically binds to ufmylated RPL26/uL24 via its UFIM motif, resulting in stable association between the 60S ribosome and the UREL complex, followed by dissociation of the 60S ribosome subunit from the endoplasmic reticulum membrane. The UREL complex is also involved in reticulophagy in response to endoplasmic reticulum stress by promoting ufmylation of proteins such as CYB5R3 and RPN1, thereby promoting lysosomal degradation of ufmylated proteins. Ufmylation-dependent reticulophagy inhibits the unfolded protein response (UPR) by regulating ERN1/IRE1-alpha stability. Acts as a regulator of immunity by promoting differentiation of B-cells into plasma cells: acts by promoting expansion of the endoplasmic reticulum and regulating the unfolded protein response (UPR). May also be required for TRIP4 ufmylation. May play a role in NF-kappa-B-mediated transcription through regulation of the phosphorylation and the degradation of NFKBIA, the inhibitor of NF-kappa-B. Plays a role in cartilage development through SOX9, inhibiting the ubiquitin-mediated proteasomal degradation of this transcriptional regulator. Required for stabilization and ufmylation of ATG9A. The sequence is that of DDRGK domain-containing protein 1 from Bos taurus (Bovine).